The sequence spans 489 residues: IPT/TIG domain-containing protein BACOVA_02650 (489 aa).

An N-terminal signal peptide occupies residues 1–27 (MKSIYKYLDTRLFLIGLLVLPFLAVVS). The N-palmitoyl cysteine moiety is linked to residue Cys-28. Cys-28 is lipidated: S-diacylglycerol cysteine. 3 consecutive IPT/TIG domains span residues 57–103 (VNPG…PNEL), 136–204 (PYIT…TAPA), and 232–304 (PVVT…AIGG).

It is found in the cell outer membrane. It functions in the pathway glucan metabolism; xyloglucan degradation. Functionally, polysaccharide-binding protein present at the surface of the cell. Probably mediates xyloglucan-binding before xyloglucan transport in the periplasm for degradation. This Bacteroides ovatus (strain ATCC 8483 / DSM 1896 / JCM 5824 / BCRC 10623 / CCUG 4943 / NCTC 11153) protein is IPT/TIG domain-containing protein BACOVA_02650.